Consider the following 262-residue polypeptide: MTRIHPTAIVEPGAQIDESVEIGPYAIVGPHVTIGARTTIGSHSVIEGHTTLGEDNRIGHYASVGGRPQDMKYKDEPTKLVIGNRNTIREFTTIHTGTVQDVGVTTLGDDNWIMAYVHIGHDCRVGNNVILSSNAQMAGHVEIGDFAIIGGMSGVHQFVRIGAHSMLGGASALVQDIPPFVIAAGNKAEPHGINVEGLRRRGFSADAISALRSAYRVLYKNGLSLEEAKVQLRELAEAGGDGDAPVTALVEFIDASQRGIIR.

This sequence belongs to the transferase hexapeptide repeat family. LpxA subfamily. In terms of assembly, homotrimer.

It localises to the cytoplasm. It catalyses the reaction a (3R)-hydroxyacyl-[ACP] + UDP-N-acetyl-alpha-D-glucosamine = a UDP-3-O-[(3R)-3-hydroxyacyl]-N-acetyl-alpha-D-glucosamine + holo-[ACP]. Its pathway is glycolipid biosynthesis; lipid IV(A) biosynthesis; lipid IV(A) from (3R)-3-hydroxytetradecanoyl-[acyl-carrier-protein] and UDP-N-acetyl-alpha-D-glucosamine: step 1/6. Involved in the biosynthesis of lipid A, a phosphorylated glycolipid that anchors the lipopolysaccharide to the outer membrane of the cell. This is Acyl-[acyl-carrier-protein]--UDP-N-acetylglucosamine O-acyltransferase from Burkholderia orbicola (strain MC0-3).